The primary structure comprises 209 residues: Transcriptional activator FHA1 (209 aa).

In terms of domain architecture, FHA spans 30 to 87 (IILGRNSKKSTVDVDLSSLGGGMNISRHHARIFYDFQRRRFNLEVLGKNGCFVEGVLH). A compositionally biased stretch (acidic residues) spans 157-171 (YDEEEYDDDDDDDDG). The interval 157–209 (YDEEEYDDDDDDDDGTGGKKMRRCDGAEGGGGYGGYGSCGSSGKASISGQLGQ) is disordered. Over residues 183 to 196 (AEGGGGYGGYGSCG) the composition is skewed to gly residues. Residues 200–209 (KASISGQLGQ) show a composition bias toward polar residues.

As to expression, expressed in roots, stems, leaves, young flower buds and open flowers.

It is found in the nucleus. Its function is as follows. Transcription regulator that may be involved in the control of the pre-rRNA processing machinery. Can rescue the phenotypes of slow growth and defective rRNA processing in the yeast fhl1 null mutant. Shows transactivation activity in yeast. The chain is Transcriptional activator FHA1 from Nicotiana tabacum (Common tobacco).